A 466-amino-acid polypeptide reads, in one-letter code: Histidinol dehydrogenase, chloroplastic (466 aa).

A chloroplast-targeting transit peptide spans 1–30; the sequence is MSLNLSRLSLLSSPRISISTHAPRKGYVCC. NAD(+) contacts are provided by Tyr-155, Gln-217, and Asn-240. Ser-266, Gln-288, and His-291 together coordinate substrate. Gln-288 and His-291 together coordinate Zn(2+). Residues Glu-356 and His-357 each act as proton acceptor in the active site. The substrate site is built by His-357, Asp-390, Glu-444, and His-449. Position 390 (Asp-390) interacts with Zn(2+). His-449 is a Zn(2+) binding site.

This sequence belongs to the histidinol dehydrogenase family. Requires Zn(2+) as cofactor.

Its subcellular location is the plastid. It is found in the chloroplast. It carries out the reaction L-histidinol + 2 NAD(+) + H2O = L-histidine + 2 NADH + 3 H(+). Its pathway is amino-acid biosynthesis; L-histidine biosynthesis; L-histidine from 5-phospho-alpha-D-ribose 1-diphosphate: step 9/9. Catalyzes the sequential NAD-dependent oxidations of L-histidinol to L-histidinaldehyde and then to L-histidine. The protein is Histidinol dehydrogenase, chloroplastic (HISN8) of Arabidopsis thaliana (Mouse-ear cress).